A 514-amino-acid polypeptide reads, in one-letter code: Glutathione-binding protein GsiB (514 aa).

A signal peptide spans 1–27 (MSVMTIQRRWLVAAGVTAAMVASPVWA).

This sequence belongs to the bacterial solute-binding protein 5 family. The complex is composed of two ATP-binding proteins (GsiA), two transmembrane proteins (GsiC and GsiD) and a solute-binding protein (GsiB).

Its subcellular location is the periplasm. In terms of biological role, part of the ABC transporter complex GsiABCD involved in glutathione import. Binds glutathione. The polypeptide is Glutathione-binding protein GsiB (Pectobacterium atrosepticum (strain SCRI 1043 / ATCC BAA-672) (Erwinia carotovora subsp. atroseptica)).